Here is a 76-residue protein sequence, read N- to C-terminus: UPF0729 protein C18orf32 homolog (76 aa).

A necessary for its localzation to the endoplasmic reticulum and lipid droplets region spans residues 1–37 (MVCIPCIVIPVLLWVYKKFLEPYIYPLISPFVSRMWP). Residues 47–56 (KNKGKVDYKG) are compositionally biased toward basic and acidic residues. The segment at 47–76 (KNKGKVDYKGADINGLPTRGPTEMCDKKKD) is disordered.

The protein belongs to the UPF0729 family. In terms of assembly, interacts with DERL1 and AMFR. Undergoes ER-associated degradation (ERAD).

Its subcellular location is the endoplasmic reticulum. It is found in the lipid droplet. Functionally, may activate the NF-kappa-B signaling pathway. This chain is UPF0729 protein C18orf32 homolog, found in Bos taurus (Bovine).